The chain runs to 442 residues: Meiosis-specific with OB domain-containing protein (442 aa).

Positions 167–272 form a DNA-binding region, OB; it reads IINVLAAVKS…EANILLNFIR (106 aa).

Belongs to the MEIOB family. As to quaternary structure, component of a multiprotein complex with RPA2 and SPATA22. Interacts with SPATA22. Interacts with the complex BRME1:HSF2BP:BRCA2. As to expression, in fetal gonads, specifically expressed in the ovary starting at the 14th weeks post fertilization. In the adult, restricted to testis.

It is found in the cytoplasm. Its subcellular location is the nucleus. It localises to the chromosome. Single-stranded DNA-binding protein required for homologous recombination in meiosis I. Required for double strand breaks (DSBs) repair and crossover formation and promotion of faithful and complete synapsis. Not required for the initial loading of recombinases but required to maintain a proper number of RAD51 and DMC1 foci after the zygotene stage. May act by ensuring the stabilization of recombinases, which is required for successful homology search and meiotic recombination. Displays Single-stranded DNA 3'-5' exonuclease activity in vitro. The protein is Meiosis-specific with OB domain-containing protein of Homo sapiens (Human).